Reading from the N-terminus, the 472-residue chain is uncharacterized protein (472 aa).

It is found in the mitochondrion. This is an uncharacterized protein from Saccharomyces cerevisiae (strain ATCC 204508 / S288c) (Baker's yeast).